The following is a 253-amino-acid chain: Triosephosphate isomerase (253 aa).

9-11 provides a ligand contact to substrate; the sequence is NWK. The Electrophile role is filled by His-94. Glu-163 serves as the catalytic Proton acceptor. Residues Gly-169, Ser-209, and 230 to 231 each bind substrate; that span reads GG.

This sequence belongs to the triosephosphate isomerase family. As to quaternary structure, homodimer.

It localises to the cytoplasm. It carries out the reaction D-glyceraldehyde 3-phosphate = dihydroxyacetone phosphate. The protein operates within carbohydrate biosynthesis; gluconeogenesis. It functions in the pathway carbohydrate degradation; glycolysis; D-glyceraldehyde 3-phosphate from glycerone phosphate: step 1/1. Its function is as follows. Involved in the gluconeogenesis. Catalyzes stereospecifically the conversion of dihydroxyacetone phosphate (DHAP) to D-glyceraldehyde-3-phosphate (G3P). In Dehalococcoides mccartyi (strain ATCC BAA-2100 / JCM 16839 / KCTC 5957 / BAV1), this protein is Triosephosphate isomerase.